Reading from the N-terminus, the 206-residue chain is U-scoloptoxin(08)-Cw1a (206 aa).

A signal peptide spans 1 to 24 (MIFRVNLLFSCFCFVLFVFDFSNA). A propeptide spanning residues 25–164 (SKYDQGSLNI…DLPELKRRKR (140 aa)) is cleaved from the precursor. An RLWRNWE 1; approximate repeat occupies 37–43 (RLWRDWE). The stretch at 71-77 (RLWRDWE) is one RLWRNWE 2; approximate repeat. Residues 104 to 110 (RLWRDWE) form an RLWRNWE 3; approximate repeat. One copy of the RLWRNWE 4 repeat lies at 137-143 (RLWRNWE). An RLWRNWE 5; approximate repeat occupies 164-170 (RLWRNED).

The protein belongs to the scoloptoxin-08 family. Post-translationally, contains 3 disulfide bonds. Expressed by the venom gland.

It localises to the secreted. The sequence is that of U-scoloptoxin(08)-Cw1a from Cormocephalus westwoodi (Westwood's green centipede).